The following is a 239-amino-acid chain: Large ribosomal subunit protein eL32 (239 aa).

2 stretches are compositionally biased toward acidic residues: residues 1–12 (MSDENDTPEELA) and 67–91 (VEAD…ADVE). Disordered regions lie at residues 1–23 (MSDE…SKAE) and 64–178 (GLEV…HPSG). Residues 92–113 (TELRARGLTEKTPDLSEDEQRL) show a composition bias toward basic and acidic residues. A compositionally biased stretch (basic residues) spans 130-155 (YHKKKRTPTSWRRPKGTLSKQRRGIK).

The protein belongs to the eukaryotic ribosomal protein eL32 family.

The sequence is that of Large ribosomal subunit protein eL32 (rpl32e) from Halobacterium salinarum (strain ATCC 700922 / JCM 11081 / NRC-1) (Halobacterium halobium).